Here is a 1720-residue protein sequence, read N- to C-terminus: Merozoite surface protein 1 (1720 aa).

An N-terminal signal peptide occupies residues 1–19 (MKIIFFLCSFLFFIINTQC). The span at 63–112 (ASAQSGASAQSGASAQSGASAQSGASAQSGASAQSGTSGPSGPSGTSPSS) shows a compositional bias: low complexity. The disordered stretch occupies residues 63–137 (ASAQSGASAQ…PPADASDSDA (75 aa)). The segment covering 113–122 (RSNTLPRSNT) has biased composition (polar residues). Low complexity predominate over residues 123-132 (SSGASPPADA). Positions 474–519 (INNIKKKIDLEEKNINHTKEQNKKLLEDYEKSKKDYEELLEKFYEM) form a coiled coil. 4 disordered regions span residues 723–775 (SETT…PPKE), 908–955 (TGTS…SGPA), 1249–1278 (TPPQ…TQIP), and 1470–1491 (KEKF…DEQK). Acidic residues predominate over residues 743 to 753 (EVTEETEETEE). The segment covering 908–946 (TGTSSTSSPGNTTVNTAQSATHSNSQNQQSNASSTNTQN) has biased composition (low complexity). The span at 1264-1278 (VSGSSGSTKEETQIP) shows a compositional bias: polar residues. Residues 1475–1484 (SSPPTTPPSP) show a composition bias toward pro residues. EGF-like domains follow at residues 1611–1651 (HQCV…VENP) and 1652–1693 (NPTC…YPLF). 6 disulfide bridges follow: cysteine 1613/cysteine 1624, cysteine 1618/cysteine 1634, cysteine 1636/cysteine 1647, cysteine 1655/cysteine 1668, cysteine 1662/cysteine 1682, and cysteine 1684/cysteine 1698. Serine 1699 carries GPI-anchor amidated serine lipidation. Residues 1700-1720 (SSNFLGISFLLILMLILYSFI) constitute a propeptide, removed in mature form.

In terms of assembly, forms a complex composed of subunits p83, p30, p38, and p42 which remain non-covalently associated; the complex is formed at the merozoite surface prior to egress from host erythrocytes. Forms a complex composed of processed MSP1 subunits, MSP6 subunit p36 and MSP7; the complex is formed at the merozoite surface prior to egress from host erythrocytes. Within the complex, interacts (via subunit p38) with MSP6 subunit p36 and (via subunits p83, p30 and p38) with MSP7 (via subunit p22). Forms a complex composed of MSP1, MSP6, DBLMSP1 and DBLMSP2. Within the complex, interacts (via subunit p38) with DBLMSP1 and DBLMSP2. Forms a complex composed of MSP1, and rhoptry proteins RhopH3, RAP1 and CLAG9/RhopH3. Within the complex, interacts (via subunits p42 and p19) with RhopH3 (via C-terminus). Forms a complex composed of MSP1, MSP6, MSP7, MSP9 and MSP3; within the complex, MSP6 and MSP9 mediate the binding to the host erythrocyte. Interacts (via subunits p19 and p42) with MSP9; the interaction is direct; MSP1 subunits p19 or p42, and MSP9 form a co-ligand complex that interacts with host SLC4A1/Band 3 protein. May interact with PFD6. Interacts with host spectrin. As to quaternary structure, interacts with host glycophorin GYPA in a sialic acid-independent manner. Interacts with host proinflammatory cytokine S100P; the interaction blocks S100P inflammatory and chemotactic activities. In terms of assembly, interacts with host SLC4A1/Band 3 (via 5ABC region) on the host erythrocyte surface in a sialic acid-independent manner. The p190 precursor is cleaved by SUB1 prior to merozoite egress into 4 subunits p83, p30, p38, and p42 which remain non-covalently associated. SUB1-mediated proteolytic cleavage occurs in an orderly manner; the first cleavage occurs at the p30/p38 site, followed by cleavage at the p83/p30 site, in the 3D7 strain a second cleavage occurs at the N-terminus of p83, the last cleavage occurs at the p38/p42 site. The order of cleavage is essential for parasite viability. SUB1-mediated processing is essential for merozoite egress. In a second processing step during erythrocyte invasion, p42 is cleaved by SUB2 into p33 and p19; the latter remains attached to the merozoite surface via its GPI-anchor and is endocytosed during the subsequent ring stage.

It is found in the cell membrane. It localises to the secreted. The protein localises to the vacuole membrane. During the asexual blood stage, involved in merozoite egress from host erythrocytes possibly via its interaction with the host cytoskeleton protein spectrin resulting in the destabilization of the host cytoskeleton and thus leading to erythrocyte cell membrane rupture. Involved in the binding to host erythrocytes and is required for host erythrocyte invasion. In terms of biological role, by binding to host proinflammatory cytokine S100P may interfere with host immune responses. Its function is as follows. Involved in merozoite invasion of host erythrocytes. May play a role in the biogenesis and/or function of the food vacuole during the intraerythrocytic development. The polypeptide is Merozoite surface protein 1 (Plasmodium falciparum (isolate 3D7)).